Reading from the N-terminus, the 1179-residue chain is Serine/threonine-protein kinase pakG (1179 aa).

Residues 12-53 (SKTNEDIELIKQKLKEDRELLEKERAQFEEERKIIFESLNKV) adopt a coiled-coil conformation. A CRIB domain is found at 111-124 (IGTPFNVQHKVHVD). Residues 139–390 (FLIDCILGTG…AIELLTHPFL (252 aa)) enclose the Protein kinase domain. Residues 145–153 (LGTGSYGTV) and lysine 168 contribute to the ATP site. Catalysis depends on aspartate 257, which acts as the Proton acceptor. 4 disordered regions span residues 414-469 (KKKK…SSLD), 589-631 (IGNS…NNNN), 705-1086 (SSSS…PITL), and 1121-1179 (TEIN…SPKK). Residues 621 to 668 (NNNNNNNNNNNEFLINQIKKELILDFNENMKQYINQQLTNLKEEMLKE) adopt a coiled-coil conformation. 2 stretches are compositionally biased toward low complexity: residues 705-723 (SSSS…SNSS) and 743-761 (LPPS…TSSP). Pro residues predominate over residues 762–776 (SPSPSPSPSPSPSSP). 2 stretches are compositionally biased toward low complexity: residues 777-788 (LPSSSTSTVNTP) and 812-833 (NNNN…NNNN). Polar residues predominate over residues 834-857 (VIQSPKLNNRPLSPTTPTKQFNNR). The span at 864–891 (FNNRPPSPSKFNNRPPSPSNRPLSPKNS) shows a compositional bias: low complexity. Residues 892–946 (YNSLEKSNNGSISNNRPLSPKNSLEKSTTQNNTSSEDISTTTVTVTSEQGGTPIT) are compositionally biased toward polar residues. Positions 954–963 (RPKPSPPPIP) are enriched in pro residues. Low complexity-rich tracts occupy residues 964–997 (MNKS…TIAA), 1024–1046 (TTIT…SPNS), and 1053–1077 (ITTS…SSSN). Polar residues predominate over residues 1121–1135 (TEINLPSSSPSTPQK). Residues 1137-1158 (NTPSSIPTTPTTPTTNGGSVSS) are compositionally biased toward low complexity.

It belongs to the protein kinase superfamily. STE Ser/Thr protein kinase family. STE20 subfamily. Mg(2+) serves as cofactor.

The enzyme catalyses L-seryl-[protein] + ATP = O-phospho-L-seryl-[protein] + ADP + H(+). It catalyses the reaction L-threonyl-[protein] + ATP = O-phospho-L-threonyl-[protein] + ADP + H(+). The polypeptide is Serine/threonine-protein kinase pakG (Dictyostelium discoideum (Social amoeba)).